The sequence spans 144 residues: Large ribosomal subunit protein uL14 (144 aa).

Belongs to the universal ribosomal protein uL14 family. Part of the 50S ribosomal subunit. Forms a cluster with proteins L3 and L24e, part of which may contact the 16S rRNA in 2 intersubunit bridges.

Functionally, binds to 23S rRNA. Forms part of two intersubunit bridges in the 70S ribosome. The chain is Large ribosomal subunit protein uL14 from Pyrobaculum arsenaticum (strain DSM 13514 / JCM 11321 / PZ6).